Here is a 135-residue protein sequence, read N- to C-terminus: MAEAFKFELVSPERLLVSEQVESVVIPGAEGEMTVMAHHAPVMTTIKPGVVTVKTASGGEERYVVFGGFADIVPAGCTLLAESAVAVKDVDRADLARRIQEAKEDAADAKDDQARSKAEQFLSQLTTLEGAILPA.

The protein belongs to the ATPase epsilon chain family. As to quaternary structure, F-type ATPases have 2 components, CF(1) - the catalytic core - and CF(0) - the membrane proton channel. CF(1) has five subunits: alpha(3), beta(3), gamma(1), delta(1), epsilon(1). CF(0) has three main subunits: a, b and c.

The protein localises to the cell inner membrane. Functionally, produces ATP from ADP in the presence of a proton gradient across the membrane. This chain is ATP synthase epsilon chain, found in Mesorhizobium japonicum (strain LMG 29417 / CECT 9101 / MAFF 303099) (Mesorhizobium loti (strain MAFF 303099)).